The primary structure comprises 669 residues: Probable potassium transport system protein Kup (669 aa).

Transmembrane regions (helical) follow at residues 47 to 67, 86 to 106, 144 to 164, 172 to 192, 206 to 226, 252 to 272, 288 to 308, 326 to 346, 378 to 398, 404 to 424, 435 to 455, and 460 to 480; these read VLML…TSPL, VIGI…IKYM, TIIG…TPAI, GLTL…IFVM, IGVI…LLGI, GMAG…GEAL, WFFV…ALLL, ALLP…QALI, IYIP…VLTF, LAAA…ILAF, LLKS…FFGA, and IPHG…LMTT.

It belongs to the HAK/KUP transporter (TC 2.A.72) family.

The protein resides in the cell inner membrane. It catalyses the reaction K(+)(in) + H(+)(in) = K(+)(out) + H(+)(out). Its function is as follows. Transport of potassium into the cell. Likely operates as a K(+):H(+) symporter. This is Probable potassium transport system protein Kup from Bdellovibrio bacteriovorus (strain ATCC 15356 / DSM 50701 / NCIMB 9529 / HD100).